Reading from the N-terminus, the 556-residue chain is Arginine--tRNA ligase 1 (556 aa).

The 'HIGH' region motif lies at 132-142; sequence ANPTGDLHLGH.

The protein belongs to the class-I aminoacyl-tRNA synthetase family. Monomer.

The protein resides in the cytoplasm. It catalyses the reaction tRNA(Arg) + L-arginine + ATP = L-arginyl-tRNA(Arg) + AMP + diphosphate. In Bacillus anthracis, this protein is Arginine--tRNA ligase 1.